Here is an 88-residue protein sequence, read N- to C-terminus: MGLTLKEHAEVCMALAESSASAGLCYMMSNVAVNCLNLFGSYQLKQKIFSDIVQNKTFAALAYSELGTGTHFYSSFYINMAWNLVKIM.

The first 22 residues, 1 to 22, serve as a signal peptide directing secretion; the sequence is MGLTLKEHAEVCMALAESSASA.

This is an uncharacterized protein from Haemophilus influenzae (strain ATCC 51907 / DSM 11121 / KW20 / Rd).